The primary structure comprises 589 residues: Protein FAM117B (589 aa).

The interval 1–310 (MSQRVRRNGS…RDKERQSPFH (310 aa)) is disordered. S10 is modified (phosphoserine). Residues 16-29 (SLGGGAVATAGGPG) are compositionally biased toward gly residues. Positions 45 to 56 (QQQQQQHGSPTR) are enriched in low complexity. The span at 57 to 85 (SGGGGGGNNNGGCCGGASGPAGGGGGGGP) shows a compositional bias: gly residues. At S106 the chain carries Phosphoserine. Low complexity predominate over residues 108-136 (TVATQTGASATSTRGTSPTRSAAPGARGS). Residues 137 to 146 (PPRPPPPPPL) are compositionally biased toward pro residues. Composition is skewed to low complexity over residues 147–158 (LGTVSSPSSSPT) and 207–220 (PSSSPSSIIRRTSS). A phosphoserine mark is found at S210, S219, S220, and S273. Positions 292–302 (RSKHSSRHHRD) are enriched in basic residues. Phosphoserine is present on residues S345 and S391. Disordered stretches follow at residues 370-464 (QDIP…NNSY) and 556-589 (STNTEQDRVSRGTSTVMPSASLLPPPEPIEEAEG). Over residues 384-397 (QRSSSTRSIDTQTP) the composition is skewed to polar residues. Over residues 404-417 (SNNSSRSQSVSPTS) the composition is skewed to low complexity. A phosphoserine mark is found at S449 and S457.

The chain is Protein FAM117B (FAM117B) from Homo sapiens (Human).